We begin with the raw amino-acid sequence, 723 residues long: Tripartite motif-containing protein 42 (723 aa).

The RING-type zinc-finger motif lies at 146–192; the sequence is CPMCNRLRLHSFMLPCNHSLCEKCLRQLQKHAEVTENFFILICPMCS. B box-type zinc fingers lie at residues 235–280 and 285–326; these read PILC…FVDT and QDEK…TVSL. Cysteine 290, histidine 293, cysteine 313, and histidine 318 together coordinate Zn(2+). Positions 382-412 form a coiled coil; it reads KLRAILQEKEKIIMEQIENLEVSRQKEIEKY. A COS domain is found at 434–492; it reads LKETGQVAFLQSAKILVDQIEEGIQNTFRPDPQLRLHSLHCIPLDFAELSNAIHELFPT. The 99-residue stretch at 603 to 701 folds into the Fibronectin type-III domain; the sequence is TPGPIVIYQT…DICKVVTPDG (99 aa).

It belongs to the TRIM/RBCC family.

In Mus musculus (Mouse), this protein is Tripartite motif-containing protein 42 (Trim42).